The following is a 306-amino-acid chain: MELKDYYAIMGVKPTDDLKTIKTAYRRLARKYHPDVSKEPDAEARFKEVAEAWEVLSDEQRRAEYDQLWQHRNDPQFNRQFQQGEGQSYNAEDFDDIFSSIFGQHGQQSRQRQATRGHDIEIEVAVFLEETLAEHSRTISYNLPVYNAFGLVEREIPKTLNVKIPAGVGNGQRIRLKGQGTPGENGGPNGDLWLVIHIAPHPLFDIVNQDLEIVVPLAPWEAALGAKVAVPTLKEKILLTIPPGSQAGQRLRIRGKGLVSKKHTGDLYAVIKIVMPPKPDDSATALWQQLADAQSSFDPRKEWGKA.

Residues D5–W69 enclose the J domain.

It is found in the cytoplasm. The protein localises to the nucleoid. Functionally, DNA-binding protein that preferentially recognizes a curved DNA sequence. It is probably a functional analog of DnaJ; displays overlapping activities with DnaJ, but functions under different conditions, probably acting as a molecular chaperone in an adaptive response to environmental stresses other than heat shock. Lacks autonomous chaperone activity; binds native substrates and targets them for recognition by DnaK. Its activity is inhibited by the binding of CbpM. The polypeptide is Curved DNA-binding protein (Citrobacter koseri (strain ATCC BAA-895 / CDC 4225-83 / SGSC4696)).